Here is a 46-residue protein sequence, read N- to C-terminus: Photosystem II reaction center protein K (46 aa).

Positions 1–9 (MESILMIFA) are excised as a propeptide. The chain crosses the membrane as a helical span at residues 25 to 45 (LPVIPVLFLLLAFVWQAAVSF).

It belongs to the PsbK family. As to quaternary structure, PSII is composed of 1 copy each of membrane proteins PsbA, PsbB, PsbC, PsbD, PsbE, PsbF, PsbH, PsbI, PsbJ, PsbK, PsbL, PsbM, PsbT, PsbX, PsbY, PsbZ, Psb30/Ycf12, at least 3 peripheral proteins of the oxygen-evolving complex and a large number of cofactors. It forms dimeric complexes.

The protein resides in the plastid. It localises to the chloroplast thylakoid membrane. One of the components of the core complex of photosystem II (PSII). PSII is a light-driven water:plastoquinone oxidoreductase that uses light energy to abstract electrons from H(2)O, generating O(2) and a proton gradient subsequently used for ATP formation. It consists of a core antenna complex that captures photons, and an electron transfer chain that converts photonic excitation into a charge separation. This is Photosystem II reaction center protein K from Stigeoclonium helveticum (Green alga).